The sequence spans 466 residues: Soluble pyridine nucleotide transhydrogenase (466 aa).

36-45 (ERYHNVGGGC) serves as a coordination point for FAD.

Belongs to the class-I pyridine nucleotide-disulfide oxidoreductase family. The cofactor is FAD.

The protein resides in the cytoplasm. It catalyses the reaction NAD(+) + NADPH = NADH + NADP(+). Its function is as follows. Conversion of NADPH, generated by peripheral catabolic pathways, to NADH, which can enter the respiratory chain for energy generation. This Salmonella paratyphi C (strain RKS4594) protein is Soluble pyridine nucleotide transhydrogenase.